A 690-amino-acid chain; its full sequence is Protein arginine N-methyltransferase 7 (690 aa).

SAM-dependent MTase PRMT-type domains are found at residues 14–357 and 366–690; these read QNSW…YSLW and TKSV…QKKL.

Belongs to the class I-like SAM-binding methyltransferase superfamily. Protein arginine N-methyltransferase family. PRMT7 subfamily.

Functionally, essential arginine methyltransferase that can both catalyze the formation of omega-N monomethylarginine (MMA) and symmetrical dimethylarginine (sDMA). Specifically mediates the symmetrical dimethylation of arginine residues in the small nuclear ribonucleoproteins SmD1 and SmD3. This Drosophila erecta (Fruit fly) protein is Protein arginine N-methyltransferase 7 (Art7).